Consider the following 124-residue polypeptide: Small ribosomal subunit protein uS12 (124 aa).

Asp-89 bears the 3-methylthioaspartic acid mark. Position 108 is an N6-acetyllysine (Lys-108).

The protein belongs to the universal ribosomal protein uS12 family. In terms of assembly, part of the 30S ribosomal subunit. Contacts proteins S8 and S17. May interact with IF1 in the 30S initiation complex.

Functionally, with S4 and S5 plays an important role in translational accuracy. Its function is as follows. Interacts with and stabilizes bases of the 16S rRNA that are involved in tRNA selection in the A site and with the mRNA backbone. Located at the interface of the 30S and 50S subunits, it traverses the body of the 30S subunit contacting proteins on the other side and probably holding the rRNA structure together. The combined cluster of proteins S8, S12 and S17 appears to hold together the shoulder and platform of the 30S subunit. This Escherichia coli (strain K12 / MC4100 / BW2952) protein is Small ribosomal subunit protein uS12.